A 163-amino-acid polypeptide reads, in one-letter code: Phosphopantetheine adenylyltransferase (163 aa).

Ser-10 provides a ligand contact to substrate. ATP-binding positions include Ser-10–Phe-11 and His-18. Substrate contacts are provided by Lys-42, Leu-74, and Arg-88. ATP is bound by residues Gly-89–Arg-91, Glu-99, and Tyr-124–Ser-130.

This sequence belongs to the bacterial CoaD family. As to quaternary structure, homohexamer. The cofactor is Mg(2+).

Its subcellular location is the cytoplasm. It catalyses the reaction (R)-4'-phosphopantetheine + ATP + H(+) = 3'-dephospho-CoA + diphosphate. It participates in cofactor biosynthesis; coenzyme A biosynthesis; CoA from (R)-pantothenate: step 4/5. Reversibly transfers an adenylyl group from ATP to 4'-phosphopantetheine, yielding dephospho-CoA (dPCoA) and pyrophosphate. The protein is Phosphopantetheine adenylyltransferase of Bacillus anthracis (strain A0248).